The primary structure comprises 509 residues: Zinc finger CCCH-type with G patch domain-containing protein (509 aa).

The disordered stretch occupies residues 41–61 (TRGSEPEATSDTKTPETSDNI). The span at 47-58 (EATSDTKTPETS) shows a compositional bias: polar residues. The C3H1-type zinc-finger motif lies at 155-178 (PCNYFLEGECRFDEVRCRYSHGAL). Residues 254 to 278 (DDDLTSESEESNETDGSDAGNDSDM) form a disordered region. The 47-residue stretch at 310-356 (TRGIGSKLMANMGYIHGTGLGSDGRGIVTPVSAQILPQGRSLDACME) folds into the G-patch domain. The tract at residues 410-433 (GSQQTENANKKTKPNNLQQHSNKT) is disordered. Polar residues predominate over residues 423 to 433 (PNNLQQHSNKT).

The protein resides in the nucleus. Functionally, transcription repressor. The chain is Zinc finger CCCH-type with G patch domain-containing protein from Drosophila mojavensis (Fruit fly).